Consider the following 305-residue polypeptide: Porphobilinogen deaminase (305 aa).

Cys239 bears the S-(dipyrrolylmethanemethyl)cysteine mark.

This sequence belongs to the HMBS family. As to quaternary structure, monomer. Requires dipyrromethane as cofactor.

It catalyses the reaction 4 porphobilinogen + H2O = hydroxymethylbilane + 4 NH4(+). It functions in the pathway porphyrin-containing compound metabolism; protoporphyrin-IX biosynthesis; coproporphyrinogen-III from 5-aminolevulinate: step 2/4. Tetrapolymerization of the monopyrrole PBG into the hydroxymethylbilane pre-uroporphyrinogen in several discrete steps. The protein is Porphobilinogen deaminase of Dichelobacter nodosus (strain VCS1703A).